Reading from the N-terminus, the 140-residue chain is Nucleoside diphosphate kinase (140 aa).

Lysine 11, phenylalanine 59, arginine 87, threonine 93, arginine 104, and asparagine 114 together coordinate ATP. Histidine 117 serves as the catalytic Pros-phosphohistidine intermediate.

Belongs to the NDK family. In terms of assembly, homotetramer. Requires Mg(2+) as cofactor.

The protein resides in the cytoplasm. It carries out the reaction a 2'-deoxyribonucleoside 5'-diphosphate + ATP = a 2'-deoxyribonucleoside 5'-triphosphate + ADP. It catalyses the reaction a ribonucleoside 5'-diphosphate + ATP = a ribonucleoside 5'-triphosphate + ADP. In terms of biological role, major role in the synthesis of nucleoside triphosphates other than ATP. The ATP gamma phosphate is transferred to the NDP beta phosphate via a ping-pong mechanism, using a phosphorylated active-site intermediate. The chain is Nucleoside diphosphate kinase from Jannaschia sp. (strain CCS1).